Reading from the N-terminus, the 215-residue chain is MPPTAPPEKMMFQLILRRRGISDQAVLRAMEEVPREEFVLPADRADAYRDSAMAIACGQTISQPFVVAYMTEQLKLQKSHRVLEIGTGSGYQAAVLARLTDHVLTVERFRTLADRARERLEKLNCFNVEVMLGDGYALPAGAGQFDRIIVTAAMEDIPQSLLDRLEPDGILIAPVGPHHGVQRLVRVTRTGDRFDRKELVDVRFVPAIPGIAREL.

Ser62 is an active-site residue.

It belongs to the methyltransferase superfamily. L-isoaspartyl/D-aspartyl protein methyltransferase family.

The protein localises to the cytoplasm. The catalysed reaction is [protein]-L-isoaspartate + S-adenosyl-L-methionine = [protein]-L-isoaspartate alpha-methyl ester + S-adenosyl-L-homocysteine. Catalyzes the methyl esterification of L-isoaspartyl residues in peptides and proteins that result from spontaneous decomposition of normal L-aspartyl and L-asparaginyl residues. It plays a role in the repair and/or degradation of damaged proteins. The protein is Protein-L-isoaspartate O-methyltransferase of Bradyrhizobium sp. (strain ORS 278).